We begin with the raw amino-acid sequence, 464 residues long: Soluble pyridine nucleotide transhydrogenase (464 aa).

Residue 35-44 coordinates FAD; it reads DDRRQVGGNC.

This sequence belongs to the class-I pyridine nucleotide-disulfide oxidoreductase family. Requires FAD as cofactor.

It localises to the cytoplasm. It carries out the reaction NAD(+) + NADPH = NADH + NADP(+). Functionally, conversion of NADPH, generated by peripheral catabolic pathways, to NADH, which can enter the respiratory chain for energy generation. This is Soluble pyridine nucleotide transhydrogenase from Pseudomonas putida (strain GB-1).